A 1029-amino-acid polypeptide reads, in one-letter code: Tyrosine-protein kinase-like otk (1029 aa).

A signal peptide spans 1–18 (MISIYGLVMALMMASVLA). The Extracellular portion of the chain corresponds to 19 to 577 (SSSRFQRVPQ…GGDGFLVTRA (559 aa)). Ig-like C2-type domains follow at residues 21-104 (SRFQ…REAS), 105-195 (PPAK…RVMS), 247-361 (PEDL…APIS), 364-459 (PGIL…VAIN), and 464-554 (PKFS…VQLV). Asparagine 35 carries an N-linked (GlcNAc...) asparagine glycan. Disulfide bonds link cysteine 42–cysteine 91, cysteine 133–cysteine 184, cysteine 272–cysteine 350, and cysteine 395–cysteine 443. Asparagine 332, asparagine 413, asparagine 425, asparagine 440, asparagine 453, asparagine 508, and asparagine 520 each carry an N-linked (GlcNAc...) asparagine glycan. The cysteines at positions 486 and 538 are disulfide-linked. A helical membrane pass occupies residues 578 to 598 (VLITMTVALAYIVLVVGLMLW). The Cytoplasmic segment spans residues 599–1029 (CRYRRQARKA…LSKAMQIAEK (431 aa)). 2 disordered regions span residues 613–675 (LSTK…KKSA) and 714–756 (SPSD…KTSM). The span at 651-669 (KSSGDAQKSDDTACSQQSR) shows a compositional bias: polar residues. Phosphoserine is present on serine 674. The Protein kinase; inactive domain occupies 688 to 1024 (LSELIQIGRG…QLGAALSKAM (337 aa)). Residues 716-727 (SDKDADTEKQHS) show a composition bias toward basic and acidic residues.

The protein belongs to the protein kinase superfamily. Tyr protein kinase family. Insulin receptor subfamily. Interacts with plexA; component of a receptor complex that mediates the repulsive signaling in response to Semaphorin ligands.

It is found in the cell membrane. In terms of biological role, acts as a calcium-dependent, homophilic cell adhesion molecule that regulates neural recognition during the development of the nervous system. Component of the repulsive Plexin signaling response to regulate motor axon guidance at the embryonic stage. Also component of a receptor complex that is required in the adult visual system to innervate the lamina layer; specific targeting of R1-R6 axons. In Drosophila sechellia (Fruit fly), this protein is Tyrosine-protein kinase-like otk.